The sequence spans 579 residues: Fatty-acid amide hydrolase 1 (579 aa).

A helical membrane pass occupies residues 9–29; the sequence is TLSGVSGVCLACSLLSAAVVL. Residues 30-403 are Cytoplasmic-facing; sequence RWTGRQKARG…GDFVDPCLGD (374 aa). The active-site Charge relay system is the K142. Substrate contacts are provided by residues M191, S217, and 238-241; that span reads IGGS. The Charge relay system role is filled by S217. S241 functions as the Acyl-ester intermediate in the catalytic mechanism. At S241 the chain carries Phosphoserine. Residues 404 to 433 lie within the membrane without spanning it; that stretch reads LILILRLPSWFKRLLSLLLKPLFPRLAAFL. The Cytoplasmic portion of the chain corresponds to 434–579; sequence NSMRPRSAEK…QLMTPQKQPS (146 aa).

This sequence belongs to the amidase family. Homodimer. Found in neuronal cells throughout the CNS. Expressed in liver and brain, and to a lesser extent in spleen, lung, kidney and testes.

It is found in the endoplasmic reticulum membrane. Its subcellular location is the golgi apparatus membrane. It catalyses the reaction N-(5Z,8Z,11Z,14Z-eicosatetraenoyl)-ethanolamine + H2O = ethanolamine + (5Z,8Z,11Z,14Z)-eicosatetraenoate. It carries out the reaction (9Z)-octadecenamide + H2O = (9Z)-octadecenoate + NH4(+). The catalysed reaction is 2-(5Z,8Z,11Z,14Z-eicosatetraenoyl)-glycerol + H2O = glycerol + (5Z,8Z,11Z,14Z)-eicosatetraenoate + H(+). The enzyme catalyses (9Z,12Z,15Z)-octadecatrienamide + H2O = (9Z,12Z,15Z)-octadecatrienoate + NH4(+). It catalyses the reaction (5Z,8Z,11Z,14Z)-eicosatetraenamide + H2O = (5Z,8Z,11Z,14Z)-eicosatetraenoate + NH4(+). It carries out the reaction (6Z)-octadecenamide + H2O = (6Z)-octadecenoate + NH4(+). The catalysed reaction is (15Z)-tetracosenamide + H2O = (15Z)-tetracosenoate + NH4(+). The enzyme catalyses (8Z,11Z,14Z)-eicosatrienamide + H2O = (8Z,11Z,14Z)-eicosatrienoate + NH4(+). It catalyses the reaction (11Z,14Z,17Z)-eicosatrienamide + H2O = (11Z,14Z,17Z)-eicosatrienoate + NH4(+). It carries out the reaction (11Z,14Z)-eicosadienamide + H2O = (11Z,14Z)-eicosadienoate + NH4(+). The catalysed reaction is (9Z,12Z)-octadecadienamide + H2O = (9Z,12Z)-octadecadienoate + NH4(+). The enzyme catalyses tetradecamide + H2O = tetradecanoate + NH4(+). It catalyses the reaction N-(9Z-octadecenoyl) ethanolamine + H2O = ethanolamine + (9Z)-octadecenoate. It carries out the reaction N-(9Z-octadecenoyl)-taurine + H2O = taurine + (9Z)-octadecenoate. The catalysed reaction is 1-O-methyl-(5Z,8Z,11Z,14Z)-eicosatetraenoate + H2O = methanol + (5Z,8Z,11Z,14Z)-eicosatetraenoate + H(+). The enzyme catalyses (11Z)-eicosenamide + H2O = (11Z)-eicosenoate + NH4(+). It catalyses the reaction N-(9Z-hexadecenoyl) ethanolamine + H2O = (9Z)-hexadecenoate + ethanolamine. It carries out the reaction N-octadecanoyl ethanolamine + H2O = octadecanoate + ethanolamine. The catalysed reaction is N-docosanoyl-ethanolamine + H2O = docosanoate + ethanolamine. The enzyme catalyses N-tetracosanoyl-taurine + H2O = tetracosanoate + taurine. It catalyses the reaction N-(15Z-tetracosenoyl)-ethanolamine + H2O = (15Z)-tetracosenoate + ethanolamine. It carries out the reaction N-docosanoyl-taurine + H2O = docosanoate + taurine. The catalysed reaction is N-(15Z-tetracosenoyl)-taurine + H2O = (15Z)-tetracosenoate + taurine. The enzyme catalyses N-tricosanoyl-taurine + H2O = tricosanoate + taurine. It catalyses the reaction (9Z)-octadecenoate + glycine = N-(9Z-octadecenoyl)glycine + H2O. It carries out the reaction N-(5Z,8Z,11Z,14Z)-eicosatetraenoyl-glycine + H2O = (5Z,8Z,11Z,14Z)-eicosatetraenoate + glycine. The catalysed reaction is N-(5Z,8Z,11Z,14Z-eicosatetraenoyl)-L-serine + H2O = (5Z,8Z,11Z,14Z)-eicosatetraenoate + L-serine. With respect to regulation, inhibited by trifluoromethyl ketone. Catalyzes the hydrolysis of endogenous amidated lipids like the sleep-inducing lipid oleamide ((9Z)-octadecenamide), the endocannabinoid anandamide (N-(5Z,8Z,11Z,14Z-eicosatetraenoyl)-ethanolamine), as well as other fatty amides, to their corresponding fatty acids, thereby regulating the signaling functions of these molecules. Hydrolyzes polyunsaturated substrate anandamide preferentially as compared to monounsaturated substrates. It can also catalyze the hydrolysis of the endocannabinoid 2-arachidonoylglycerol (2-(5Z,8Z,11Z,14Z-eicosatetraenoyl)-glycerol). FAAH cooperates with PM20D1 in the hydrolysis of amino acid-conjugated fatty acids such as N-fatty acyl glycine and N-fatty acyl-L-serine, thereby acting as a physiological regulator of specific subsets of intracellular, but not of extracellular, N-fatty acyl amino acids. The sequence is that of Fatty-acid amide hydrolase 1 (Faah) from Rattus norvegicus (Rat).